Here is a 622-residue protein sequence, read N- to C-terminus: Membrane protein insertase YidC (622 aa).

A helical transmembrane segment spans residues 6 to 26 (FIAVVLSVLVLVGASFLQELL). The segment at 37–71 (AEHTLSAVPEETRTQSAHGGAADTQETTQPAAHPS) is disordered. Transmembrane regions (helical) follow at residues 413 to 433 (LIPNWGVAIILVTIAIKVLFF), 483 to 503 (LSGCLPTLVQMPIIFAMYRLF), 513 to 533 (MFIPYWIPDLSLADSVWTLPF), and 579 to 599 (VMPLFFFFFFYDAPSGLLVYW).

Belongs to the OXA1/ALB3/YidC family. Type 1 subfamily. In terms of assembly, interacts with the Sec translocase complex via SecD. Specifically interacts with transmembrane segments of nascent integral membrane proteins during membrane integration.

It is found in the cell inner membrane. Its function is as follows. Required for the insertion and/or proper folding and/or complex formation of integral membrane proteins into the membrane. Involved in integration of membrane proteins that insert both dependently and independently of the Sec translocase complex, as well as at least some lipoproteins. Aids folding of multispanning membrane proteins. The polypeptide is Membrane protein insertase YidC (Treponema pallidum (strain Nichols)).